We begin with the raw amino-acid sequence, 329 residues long: Diaminopimelate epimerase (329 aa).

Substrate contacts are provided by Asn14 and Asn73. The active-site Proton donor is the Cys82. Substrate contacts are provided by residues 83–84 (GN), Asn170, Asn206, and 224–225 (ER). The active-site Proton acceptor is the Cys233. Residue 234–235 (GT) coordinates substrate.

This sequence belongs to the diaminopimelate epimerase family. In terms of assembly, homodimer.

Its subcellular location is the cytoplasm. It carries out the reaction (2S,6S)-2,6-diaminopimelate = meso-2,6-diaminopimelate. It functions in the pathway amino-acid biosynthesis; L-lysine biosynthesis via DAP pathway; DL-2,6-diaminopimelate from LL-2,6-diaminopimelate: step 1/1. Functionally, catalyzes the stereoinversion of LL-2,6-diaminopimelate (L,L-DAP) to meso-diaminopimelate (meso-DAP), a precursor of L-lysine and an essential component of the bacterial peptidoglycan. This is Diaminopimelate epimerase from Listeria monocytogenes serotype 4b (strain CLIP80459).